A 200-amino-acid chain; its full sequence is MARYTGPMWKISRRLGISLSGTGKELQKRPYPPGQHGPGQRRKLSEYGLQLQEKQKLRHMYGVNERQFRKTFEEAGKMPGKHGENFMILLESRLDNLVYRLGLARTRRQARQLVTHGHILVDGSRVNIPSYRVKPGQTIAVREKSRNLQVIKEALEANNYIPDYLTFNPEKMEGTYTRLPERSELPAEINEALIVEFYSR.

The segment at 22 to 42 (TGKELQKRPYPPGQHGPGQRR) is disordered. An S4 RNA-binding domain is found at 92–152 (SRLDNLVYRL…EKSRNLQVIK (61 aa)).

Belongs to the universal ribosomal protein uS4 family. In terms of assembly, part of the 30S ribosomal subunit. Contacts protein S5. The interaction surface between S4 and S5 is involved in control of translational fidelity.

In terms of biological role, one of the primary rRNA binding proteins, it binds directly to 16S rRNA where it nucleates assembly of the body of the 30S subunit. Its function is as follows. With S5 and S12 plays an important role in translational accuracy. This chain is Small ribosomal subunit protein uS4, found in Geobacillus kaustophilus (strain HTA426).